The primary structure comprises 824 residues: Serine/threonine-protein kinase SCH9 (824 aa).

The span at 1–23 (MMNFFTSKSSNQDTGFSSQHQHP) shows a compositional bias: polar residues. Disordered stretches follow at residues 1 to 37 (MMNF…STAG), 125 to 152 (NAGN…SSTT), 221 to 272 (ESLG…SQLP), and 285 to 327 (THRS…SHPI). Over residues 24 to 37 (NGQNNGNNNSSTAG) the composition is skewed to low complexity. Residues 166–378 (QREAAAAAYG…LAHASQHQWH (213 aa)) enclose the C2 domain. Low complexity predominate over residues 226–248 (INNNNNNNNNNQHNQNQHINNNN). Composition is skewed to polar residues over residues 249–272 (ENTN…SQLP) and 286–302 (HRSS…SSVT). Over residues 307-321 (RSSNSSSGSSNGPKN) the composition is skewed to low complexity. The Protein kinase domain maps to 412–671 (FEVLRLLGKG…GRELRAHPFF (260 aa)). ATP-binding positions include 418–426 (LGKGTFGQV) and K441. D538 (proton acceptor) is an active-site residue. T570 bears the Phosphothreonine; by PKH1 or PKH2 mark. In terms of domain architecture, AGC-kinase C-terminal spans 672 to 748 (ADIDWEALKQ…VDESAIDEHV (77 aa)). Position 711 is a phosphoserine; by TORC1 (S711). At T723 the chain carries Phosphothreonine; by TORC1. A Phosphoserine; by TORC1 modification is found at S726. T737 carries the post-translational modification Phosphothreonine; by TORC1. Residues S758 and S765 each carry the phosphoserine; by TORC1 modification.

The protein belongs to the protein kinase superfamily. AGC Ser/Thr protein kinase family. cAMP subfamily. In terms of processing, phosphorylated by TORC1 in nutrient-replete conditions and during mechanical stress.

It carries out the reaction L-seryl-[protein] + ATP = O-phospho-L-seryl-[protein] + ADP + H(+). It catalyses the reaction L-threonyl-[protein] + ATP = O-phospho-L-threonyl-[protein] + ADP + H(+). Activated by cAMP. Functionally, protein kinase that is part of growth control pathway which is at least partially redundant with the cAMP pathway. Regulates both BCY1 phosphorylation and MPK1 activity. Regulates ribosome biogenesis, translation initiation, and entry into stationary phase in a TORC1-dependent manner. The sequence is that of Serine/threonine-protein kinase SCH9 (SCH9) from Saccharomyces cerevisiae (strain ATCC 204508 / S288c) (Baker's yeast).